Consider the following 895-residue polypeptide: Endochitinase 2 (895 aa).

The N-terminal stretch at 1 to 22 is a signal peptide; it reads MGLTNILAAFIAVSSLFIQSLA. Positions 29–340 constitute a GH18 domain; sequence SNLAVYWGQG…DIMKEVLLRC (312 aa). The N-linked (GlcNAc...) asparagine glycan is linked to asparagine 90. Glutamate 175 functions as the Proton donor in the catalytic mechanism. A disordered region spans residues 343–712; the sequence is DPPTSTVTST…APSSSTTEDR (370 aa). Low complexity predominate over residues 346–425; the sequence is TSTVTSTISA…ISTRSASTET (80 aa). The segment covering 426-478 has biased composition (polar residues); that stretch reads VTTRSQEPPSTTISTRPASTETVTTRSQEPPSSTISTRSASTETVTTRSQEPP. The span at 479–505 shows a compositional bias: low complexity; sequence SSTISTRSASTETSTSSQDSPSTTIST. Positions 506 to 543 are enriched in polar residues; that stretch reads KSAPTGTVTTRSQDLPSTTISTRSPETETETVTTKSQD. Positions 544-555 are enriched in low complexity; the sequence is SPSITLSTRSSS. Polar residues predominate over residues 556-577; it reads AETVSTRSQHSSSTTISTKSAP. Over residues 578-589 the composition is skewed to low complexity; sequence TETGTTSEHSTS. Over residues 590–657 the composition is skewed to polar residues; sequence MPVSTRSAST…ISTELPSQTH (68 aa). 2 stretches are compositionally biased toward low complexity: residues 658–692 and 699–712; these read STTD…APTT and TLTL…TEDR. Glycine 866 is lipidated: GPI-anchor amidated glycine. A propeptide spans 867–895 (removed in mature form); sequence GAMTVRSMDVVAKALITAGAAVLGLFLGL.

This sequence belongs to the glycosyl hydrolase 18 family. Chitinase class III subfamily.

It is found in the cell membrane. The catalysed reaction is Random endo-hydrolysis of N-acetyl-beta-D-glucosaminide (1-&gt;4)-beta-linkages in chitin and chitodextrins.. Functionally, may be associated with endosporulation. This is Endochitinase 2 (CTS2) from Coccidioides immitis (strain RS) (Valley fever fungus).